Reading from the N-terminus, the 178-residue chain is Cytidylate kinase (178 aa).

Residue 7–15 (GLPGSGTTS) coordinates ATP.

It belongs to the cytidylate kinase family. Type 2 subfamily.

The protein localises to the cytoplasm. It carries out the reaction CMP + ATP = CDP + ADP. It catalyses the reaction dCMP + ATP = dCDP + ADP. This is Cytidylate kinase from Methanospirillum hungatei JF-1 (strain ATCC 27890 / DSM 864 / NBRC 100397 / JF-1).